The primary structure comprises 298 residues: Probable 2-(5''-triphosphoribosyl)-3'-dephosphocoenzyme-A synthase (298 aa).

Belongs to the CitG/MdcB family.

It carries out the reaction 3'-dephospho-CoA + ATP = 2'-(5''-triphospho-alpha-D-ribosyl)-3'-dephospho-CoA + adenine. This is Probable 2-(5''-triphosphoribosyl)-3'-dephosphocoenzyme-A synthase from Salmonella arizonae (strain ATCC BAA-731 / CDC346-86 / RSK2980).